The sequence spans 226 residues: Cytidylate kinase (226 aa).

11-19 (GPAAAGKST) serves as a coordination point for ATP.

It belongs to the cytidylate kinase family. Type 1 subfamily.

The protein localises to the cytoplasm. It catalyses the reaction CMP + ATP = CDP + ADP. The enzyme catalyses dCMP + ATP = dCDP + ADP. The protein is Cytidylate kinase of Bacillus licheniformis (strain ATCC 14580 / DSM 13 / JCM 2505 / CCUG 7422 / NBRC 12200 / NCIMB 9375 / NCTC 10341 / NRRL NRS-1264 / Gibson 46).